Consider the following 204-residue polypeptide: N-(5'-phosphoribosyl)anthranilate isomerase (204 aa).

It belongs to the TrpF family.

It catalyses the reaction N-(5-phospho-beta-D-ribosyl)anthranilate = 1-(2-carboxyphenylamino)-1-deoxy-D-ribulose 5-phosphate. Its pathway is amino-acid biosynthesis; L-tryptophan biosynthesis; L-tryptophan from chorismate: step 3/5. The protein is N-(5'-phosphoribosyl)anthranilate isomerase of Bacillus cereus (strain B4264).